The primary structure comprises 325 residues: MTATATPVPTVASHAQDITLPPPPKGDITTPILFAQDFQKPSTGYMFIKNPPPAGVPYTNIRGEPAMVTVEDLRGKENSVNLDRDSLQVLQGLTDVPRSPEVNWNSVESVEKTFYPAVEAAIKSAIPGAHTVHIFRHGIRHTQNWPVPYNPPAMIAHLDQTGPAAINRVLRHMGPVEGPRLLQGRYRIVHFWTPLNGPVYTCPVAVASSATVKDNDIQIFVSHLGGIGGLDMPLGRPVAKPDASEQYREDFGAPRYANGQRWFYLSGITQDEALLIQIFDSNALQKDSTVQGGRAVHSAFRDPRTPQGAPDRWSIEVSCLVFSDE.

A compositionally biased stretch (low complexity) spans 1-12 (MTATATPVPTVA). A disordered region spans residues 1–25 (MTATATPVPTVASHAQDITLPPPPK).

Belongs to the asaB hydroxylase/desaturase family.

It functions in the pathway secondary metabolite biosynthesis. Hydroxylase/desaturase; part of the gene cluster that mediates the biosynthesis of oxaleimides, cytotoxic compounds containing an unusual disubstituted succinimide moiety. The first step of the pathway is provided by the HR-PKS poxF that serves in a new mode of collaborative biosynthesis with the PKS-NRPS poxE, by providing the olefin containing amino acid substrate via the synthesis of an ACP-bound dec-4-enoate. The cytochrome P450 monooxygenase poxM-catalyzed oxidation at the alpha-position creates the enzyme-bound 2-hydroxydec-4-enoyl-ACP thioester, which may be prone to spontaneous hydrolysis to yield 2-hydroxydec-4-enoic acid due to increased electrophilicity of the carbonyl. 2-hydroxydec-4-enoic acid can then be further oxidized by poxM to yield the alpha-ketoacid 2-oxodec-4-enoicacid, which is reductively aminated by the aminotransferase poxL to yield (S,E)-2-aminodec-4-enoic acid. The Hybrid PKS-NRPS synthetase poxE then performs condensation between the octaketide product of its PKS modules and the amino group of (S,E)-2-aminodec-4-enoic acid which is activated and incorporated by the adenylation domain. The resulting aminoacyl product can be cyclized by the Diels-Alderase PoxQ and reductively released by the reductive (R) domain of poxE to yield an aldehyde intermediate. The released aldehyde is then substrate for a Knoevenagel condensation by the hydrolyase poxO followed by an oxidation at the 5-position of the pyrrolidone ring. The presence of the olefin from the amino acid building block allows for migration of the substituted allyl group to occur. This allylic transposition reaction takes place in a conjugate addition, semipinacol-like fashion to yield a succinimide intermediate. Iterative two-electron oxidations of the C7 methyl of the succinimide intermediate to the carboxylic acid can be catalyzed by one of two remaining cytochrome P450 monooxygenasess poxC or poxD to yield oxaleimide A. Subsequent oxidation yields the maleimide scaffold oxaleimide I. Both oxaleimide A and oxaleimide I can undergo oxidative modifications in the decalin ring to yield the series of products oxaleimides B to H. The chain is Hydroxylase/desaturase poxK from Penicillium oxalicum.